Here is a 348-residue protein sequence, read N- to C-terminus: Holliday junction branch migration complex subunit RuvB (348 aa).

Residues 3–183 (DDGLVSAAAS…FGFTAHLDFY (181 aa)) are large ATPase domain (RuvB-L). ATP contacts are provided by residues leucine 22, arginine 23, glycine 64, lysine 67, threonine 68, serine 69, 130-132 (EDF), arginine 173, tyrosine 183, and arginine 220. A Mg(2+)-binding site is contributed by threonine 68. A small ATPAse domain (RuvB-S) region spans residues 184–254 (DADELARVLT…IAQAALRIYD (71 aa)). The segment at 257–348 (GLGLDRLDRA…TQVSLFTEGE (92 aa)) is head domain (RuvB-H). DNA is bound by residues arginine 312 and arginine 317.

Belongs to the RuvB family. As to quaternary structure, homohexamer. Forms an RuvA(8)-RuvB(12)-Holliday junction (HJ) complex. HJ DNA is sandwiched between 2 RuvA tetramers; dsDNA enters through RuvA and exits via RuvB. An RuvB hexamer assembles on each DNA strand where it exits the tetramer. Each RuvB hexamer is contacted by two RuvA subunits (via domain III) on 2 adjacent RuvB subunits; this complex drives branch migration. In the full resolvosome a probable DNA-RuvA(4)-RuvB(12)-RuvC(2) complex forms which resolves the HJ.

It localises to the cytoplasm. It carries out the reaction ATP + H2O = ADP + phosphate + H(+). Functionally, the RuvA-RuvB-RuvC complex processes Holliday junction (HJ) DNA during genetic recombination and DNA repair, while the RuvA-RuvB complex plays an important role in the rescue of blocked DNA replication forks via replication fork reversal (RFR). RuvA specifically binds to HJ cruciform DNA, conferring on it an open structure. The RuvB hexamer acts as an ATP-dependent pump, pulling dsDNA into and through the RuvAB complex. RuvB forms 2 homohexamers on either side of HJ DNA bound by 1 or 2 RuvA tetramers; 4 subunits per hexamer contact DNA at a time. Coordinated motions by a converter formed by DNA-disengaged RuvB subunits stimulates ATP hydrolysis and nucleotide exchange. Immobilization of the converter enables RuvB to convert the ATP-contained energy into a lever motion, pulling 2 nucleotides of DNA out of the RuvA tetramer per ATP hydrolyzed, thus driving DNA branch migration. The RuvB motors rotate together with the DNA substrate, which together with the progressing nucleotide cycle form the mechanistic basis for DNA recombination by continuous HJ branch migration. Branch migration allows RuvC to scan DNA until it finds its consensus sequence, where it cleaves and resolves cruciform DNA. This chain is Holliday junction branch migration complex subunit RuvB, found in Frankia casuarinae (strain DSM 45818 / CECT 9043 / HFP020203 / CcI3).